We begin with the raw amino-acid sequence, 171 residues long: Photosystem I assembly protein Ycf3 (171 aa).

TPR repeat units follow at residues 33–66 (AFSY…EEDP), 70–103 (SYIL…NSRL), and 118–151 (GTKS…APNN).

This sequence belongs to the Ycf3 family.

It is found in the plastid. The protein resides in the chloroplast thylakoid membrane. Essential for the assembly of the photosystem I (PSI) complex. May act as a chaperone-like factor to guide the assembly of the PSI subunits. The polypeptide is Photosystem I assembly protein Ycf3 (Emiliania huxleyi (Coccolithophore)).